The following is a 378-amino-acid chain: Mannitol-1-phosphate 5-dehydrogenase (378 aa).

S4–G15 is a binding site for NAD(+).

It belongs to the mannitol dehydrogenase family.

It carries out the reaction D-mannitol 1-phosphate + NAD(+) = beta-D-fructose 6-phosphate + NADH + H(+). The sequence is that of Mannitol-1-phosphate 5-dehydrogenase from Streptococcus pneumoniae serotype 4 (strain ATCC BAA-334 / TIGR4).